A 453-amino-acid polypeptide reads, in one-letter code: Serine incorporator 1 (453 aa).

G2 is lipidated: N-myristoyl glycine. Residues 2-39 (GSVLGLCSVASWIPCLCGSAPCLLCRCCPSGNNSTVTR) lie on the Cytoplasmic side of the membrane. A helical transmembrane segment spans residues 40-60 (LIYALFLLVGVCVACVMLIPG). The Lumenal portion of the chain corresponds to 61 to 88 (MEEQLNKIPGFCENEKGVVPCNILVGYK). The helical transmembrane segment at 89–109 (AVYRLCFGLAMFYLLLSLLMI) threads the bilayer. Topologically, residues 110–123 (KVKSSSDPRAAVHN) are cytoplasmic. A helical membrane pass occupies residues 124–144 (GFWFFKFATAVAIIIGAFFIP). The Lumenal segment spans residues 145 to 151 (EGTFTTV). A helical transmembrane segment spans residues 152–172 (WFYVGMAGAFCFILIQLVLLI). Residues 173–197 (DFAHSWNESWVEKMEEGNSRCWYAA) are Cytoplasmic-facing. A helical membrane pass occupies residues 198–218 (LLSATALNYLLSLVAVVLFFV). Residues 219–231 (YYTHPASCAENKA) are Lumenal-facing. Residues 232–252 (FISVNMLLCIGASVMSILPKI) form a helical membrane-spanning segment. The Cytoplasmic portion of the chain corresponds to 253 to 259 (QESQPRS). A helical transmembrane segment spans residues 260–280 (GLLQSSVITVYTMYLTWSAMT). Residues 281–309 (NEPETNCNPSLLSIIGFNTTRPIPKDGQS) lie on the Lumenal side of the membrane. Residues 310–330 (VQWWHPQGIIGLVLFLLCVFY) form a helical membrane-spanning segment. Residues 331-387 (SSIRTSNNSQVNKLTLTSDESTLIEDGNGRSDGSLDDGDGIHRAVDNERDGVTYSYS) are Cytoplasmic-facing. Phosphoserine is present on S351. T352 carries the phosphothreonine modification. Residues S361 and S364 each carry the phosphoserine modification. Residues 388 to 408 (FFHFMLFLASLYIMMTLTNWY) traverse the membrane as a helical segment. The Lumenal portion of the chain corresponds to 409-426 (RYEPSREMKSQWTAVWVK). A helical membrane pass occupies residues 427–447 (ISSSWIGLVLYVWTLVAPLVL). Residues 448 to 453 (TNRDFD) lie on the Cytoplasmic side of the membrane.

This sequence belongs to the TDE1 family. As to quaternary structure, interacts with SPTLC1. Highly expressed in the neuronal populations such as Purkinje cells in the cerebellum, brainstem and spinal motor neurons, locus coeruleus and raphe nuclei.

Its subcellular location is the endoplasmic reticulum membrane. Enhances the incorporation of serine into phosphatidylserine and sphingolipids. The chain is Serine incorporator 1 (Serinc1) from Mus musculus (Mouse).